Reading from the N-terminus, the 680-residue chain is MDHSSSSNSCFSVGSTSPGAVVLLYSKELKKWDEFEDVLEERRHVSDLKFAMKCYTPLVYKGITPCKPSDIKCSVLNSEEIHYVIKQLSKESLQPVEVLREEACEILDEMSHKLRLGAIRFFAFALSKIFKQIFSKVRVNEEGIQKLQRAIQEHPVVLLPSHRSYIDFLMLSFLLYNYDLPVPVIAAGMDFLGMKMVGELLRMSGAFFMRRTFGGNKLYWAVFSEYVKTMLRNGYAPVEFFLEGTRSRSAKTLTPKFGLLNIVMEPFFKREVFDTYLVPISISYDRILEETLYAYELLGVPKPKESTTGLLKARRILSEKFGNIHVYFGDPVSLRSLAAGRMGRSPYNLVPRYIPQKQSEEMHTFVTEVAYKMQLLQIQNLVLSPWPLIVAVLLQNRPSIDFDALLEKTLWLKGLTQAFGGFLTWPDNEPAEAVIQSSILLHSNIVSLVKDRVILKMECGDSELVDGLIFQHITLLMCLAYRNQLLNVFVRPSLVAMALQMTPGFRKEDVYSCFRFLCSVFSDEFIFLPGNALKDFEEGCYLLCKSEAIQVMTRDILVTEKGNSVLEFLIGLFKPFVESYQIICKYLLNEEEDYFTEKQYFIRVRKFTSQLLDQGASQCYDVLSSDVQKNALAAFVRLGVVEKKKVNNDYIFNVNEPATTKLEEMLGCKTPVGKPATAKL.

Phosphoserine is present on residues Ser12 and Ser17. The HXXXXD motif signature appears at 162-167; it reads HRSYID. At Lys643 the chain carries N6-acetyllysine. The Microbody targeting signal motif lies at 678 to 680; that stretch reads AKL.

Belongs to the GPAT/DAPAT family. As to quaternary structure, part of a heterotrimeric complex composed of GNPAT, AGPS and a modified form of GNPAT.

The protein resides in the peroxisome membrane. It carries out the reaction dihydroxyacetone phosphate + an acyl-CoA = a 1-acylglycerone 3-phosphate + CoA. The enzyme catalyses dihydroxyacetone phosphate + hexadecanoyl-CoA = 1-hexadecanoylglycerone 3-phosphate + CoA. The protein operates within membrane lipid metabolism; glycerophospholipid metabolism. Its function is as follows. Dihydroxyacetonephosphate acyltransferase catalyzing the first step in the biosynthesis of plasmalogens, a subset of phospholipids that differ from other glycerolipids by having an alkyl chain attached through a vinyl ether linkage at the sn-1 position of the glycerol backbone, and which unique physical properties have an impact on various aspects of cell signaling and membrane biology. The polypeptide is Dihydroxyacetone phosphate acyltransferase (Bos taurus (Bovine)).